The following is a 107-amino-acid chain: Nucleoid-associated protein RP866 (107 aa).

The protein belongs to the YbaB/EbfC family. As to quaternary structure, homodimer.

The protein resides in the cytoplasm. The protein localises to the nucleoid. In terms of biological role, binds to DNA and alters its conformation. May be involved in regulation of gene expression, nucleoid organization and DNA protection. This is Nucleoid-associated protein RP866 from Rickettsia prowazekii (strain Madrid E).